The primary structure comprises 355 residues: MKKNKRLMVMAGGTGGHVFPGLAVAKKLQQQGWEIRWLGTADRMEAELVPKHGIDIDFIKVKGLRGQGIKRLVLAPFQILNAIFQAKAHIKRWQPDAVLGMGGYVSGPGGIAAWLSGIPVVLHEQNAVAGLTNHWLAKIAKKVFQAFPGAFKDAPVVGNPVREDVVALPDPMQRMQDREGAIRILVMGGSQGARILNQTMPQVMAQLGSGFEIRHQAGKGSADEVRLAYQQAGVEHVEVSEFIDDVAAQYAWADLLVCRSGALTVSEVSAAGVGAIFIPFMHKDRQQALNADHLVACGAALMIEQPQLTVDKLAGEIQKLGRDTLLSMALHARAAAQNNADQVVADAIVALTEQK.

Residues 14 to 16 (TGG), asparagine 126, arginine 162, serine 190, isoleucine 243, 262 to 267 (ALTVSE), and glutamine 287 each bind UDP-N-acetyl-alpha-D-glucosamine.

The protein belongs to the glycosyltransferase 28 family. MurG subfamily.

Its subcellular location is the cell inner membrane. The catalysed reaction is di-trans,octa-cis-undecaprenyl diphospho-N-acetyl-alpha-D-muramoyl-L-alanyl-D-glutamyl-meso-2,6-diaminopimeloyl-D-alanyl-D-alanine + UDP-N-acetyl-alpha-D-glucosamine = di-trans,octa-cis-undecaprenyl diphospho-[N-acetyl-alpha-D-glucosaminyl-(1-&gt;4)]-N-acetyl-alpha-D-muramoyl-L-alanyl-D-glutamyl-meso-2,6-diaminopimeloyl-D-alanyl-D-alanine + UDP + H(+). The protein operates within cell wall biogenesis; peptidoglycan biosynthesis. Cell wall formation. Catalyzes the transfer of a GlcNAc subunit on undecaprenyl-pyrophosphoryl-MurNAc-pentapeptide (lipid intermediate I) to form undecaprenyl-pyrophosphoryl-MurNAc-(pentapeptide)GlcNAc (lipid intermediate II). The sequence is that of UDP-N-acetylglucosamine--N-acetylmuramyl-(pentapeptide) pyrophosphoryl-undecaprenol N-acetylglucosamine transferase from Vibrio vulnificus (strain CMCP6).